A 380-amino-acid chain; its full sequence is Protein-tyrosine sulfotransferase A (380 aa).

Residues 1–6 lie on the Cytoplasmic side of the membrane; it reads MRKNRE. Residues 7-27 traverse the membrane as a helical; Signal-anchor for type II membrane protein segment; that stretch reads LLLVLFLVVFILFYFITARTA. Over 28 to 380 the chain is Lumenal; that stretch reads DDPYYSNHRE…PIVDNEVSKL (353 aa). The N-linked (GlcNAc...) asparagine glycan is linked to Asn-66. Residue 79 to 83 coordinates 3'-phosphoadenylyl sulfate; that stretch reads RSGTT. A disulfide bridge connects residues Cys-97 and Cys-157. The Proton donor/acceptor role is filled by Glu-100. The interaction with peptide substrate stretch occupies residues 102–106; it reads RVIPR. The 3'-phosphoadenylyl sulfate site is built by Arg-184, Ser-192, and Arg-196. Cys-226 and Cys-234 are joined by a disulfide. 3'-phosphoadenylyl sulfate contacts are provided by residues Tyr-239, 284 to 293, and Lys-299; that span reads SSDQVVKPVN.

It belongs to the protein sulfotransferase family.

Its subcellular location is the golgi apparatus membrane. The enzyme catalyses L-tyrosyl-[protein] + 3'-phosphoadenylyl sulfate = O-sulfo-L-tyrosine-[protein] + adenosine 3',5'-bisphosphate + H(+). Functionally, catalyzes the O-sulfation of tyrosine residues within acidic motifs of polypeptides, using 3'-phosphoadenylyl sulfate (PAPS) as cosubstrate. This Caenorhabditis elegans protein is Protein-tyrosine sulfotransferase A (tpst-1).